Consider the following 343-residue polypeptide: Heat-inducible transcription repressor HrcA (343 aa).

Belongs to the HrcA family.

Negative regulator of class I heat shock genes (grpE-dnaK-dnaJ and groELS operons). Prevents heat-shock induction of these operons. The sequence is that of Heat-inducible transcription repressor HrcA from Mycoplasma genitalium (strain ATCC 33530 / DSM 19775 / NCTC 10195 / G37) (Mycoplasmoides genitalium).